A 236-amino-acid polypeptide reads, in one-letter code: Ubiquinone biosynthesis O-methyltransferase (236 aa).

S-adenosyl-L-methionine-binding residues include R39, G59, D80, and M124.

This sequence belongs to the methyltransferase superfamily. UbiG/COQ3 family.

The enzyme catalyses a 3-demethylubiquinol + S-adenosyl-L-methionine = a ubiquinol + S-adenosyl-L-homocysteine + H(+). It catalyses the reaction a 3-(all-trans-polyprenyl)benzene-1,2-diol + S-adenosyl-L-methionine = a 2-methoxy-6-(all-trans-polyprenyl)phenol + S-adenosyl-L-homocysteine + H(+). It participates in cofactor biosynthesis; ubiquinone biosynthesis. Its function is as follows. O-methyltransferase that catalyzes the 2 O-methylation steps in the ubiquinone biosynthetic pathway. This chain is Ubiquinone biosynthesis O-methyltransferase, found in Shewanella sp. (strain ANA-3).